The chain runs to 387 residues: Phosphoglycerate kinase (387 aa).

Residues 21 to 23, Arg36, 59 to 62, Arg113, and Arg146 contribute to the substrate site; these read DLN and HLGR. ATP contacts are provided by residues Lys197, Glu314, and 340–343; that span reads GGDT.

This sequence belongs to the phosphoglycerate kinase family. Monomer.

Its subcellular location is the cytoplasm. The catalysed reaction is (2R)-3-phosphoglycerate + ATP = (2R)-3-phospho-glyceroyl phosphate + ADP. The protein operates within carbohydrate degradation; glycolysis; pyruvate from D-glyceraldehyde 3-phosphate: step 2/5. This is Phosphoglycerate kinase from Aliivibrio salmonicida (strain LFI1238) (Vibrio salmonicida (strain LFI1238)).